The chain runs to 2849 residues: Polycystin-1-like protein 1 (2849 aa).

Residues methionine 1–proline 1748 lie on the Extracellular side of the membrane. 13 N-linked (GlcNAc...) asparagine glycosylation sites follow: asparagine 8, asparagine 295, asparagine 338, asparagine 376, asparagine 447, asparagine 482, asparagine 514, asparagine 605, asparagine 657, asparagine 751, asparagine 875, asparagine 926, and asparagine 937. 2 consecutive PKD domains span residues serine 508 to lysine 590 and valine 592 to proline 673. In terms of domain architecture, REJ spans cysteine 674 to arginine 1571. Over residues asparagine 970–proline 987 the composition is skewed to low complexity. Disordered regions lie at residues asparagine 970–serine 1068 and isoleucine 1081–leucine 1118. Residues arginine 1053 to serine 1068 are compositionally biased toward basic and acidic residues. 6 N-linked (GlcNAc...) asparagine glycosylation sites follow: asparagine 1233, asparagine 1301, asparagine 1306, asparagine 1572, asparagine 1681, and asparagine 1716. The region spanning glutamine 1587–serine 1735 is the GAIN-B domain. A disulfide bond links cysteine 1691 and cysteine 1717. Residues cysteine 1691 to serine 1735 form a GPS region. A helical membrane pass occupies residues glutamate 1749 to alanine 1769. Over lysine 1770 to arginine 1956 the chain is Cytoplasmic. The PLAT domain maps to glutamine 1796–threonine 1913. Residues leucine 1957–glycine 1977 form a helical membrane-spanning segment. The Extracellular segment spans residues glycine 1978–serine 1992. Residues phenylalanine 1993 to leucine 2013 form a helical membrane-spanning segment. The Cytoplasmic segment spans residues phenylalanine 2014 to serine 2135. The disordered stretch occupies residues serine 2023–glutamine 2089. A helical membrane pass occupies residues alanine 2136 to alanine 2156. Over tyrosine 2157–serine 2174 the chain is Extracellular. The chain crosses the membrane as a helical span at residues valine 2175–alanine 2195. At tryptophan 2196–arginine 2281 the chain is on the cytoplasmic side. Residues alanine 2282 to tyrosine 2302 traverse the membrane as a helical segment. The Extracellular portion of the chain corresponds to glycine 2303 to histidine 2522. The N-linked (GlcNAc...) asparagine glycan is linked to asparagine 2426. The helical transmembrane segment at leucine 2523–tyrosine 2543 threads the bilayer. The Cytoplasmic segment spans residues arginine 2544–glutamate 2562. A helical transmembrane segment spans residues leucine 2563–alanine 2583. At glycine 2584–glycine 2616 the chain is on the extracellular side. Residues isoleucine 2617–alanine 2637 traverse the membrane as a helical segment. Residues serine 2638–serine 2646 are Cytoplasmic-facing. The chain crosses the membrane as a helical span at residues leucine 2647–leucine 2667. Topologically, residues histidine 2668 to arginine 2711 are extracellular. A helical transmembrane segment spans residues alanine 2712–leucine 2732. The Cytoplasmic segment spans residues arginine 2733–phenylalanine 2849.

It belongs to the polycystin family. In terms of assembly, heterodimer. Interacts with PKD2 to form a calcium channel. Interacts with PKD2L1; to form ciliary calcium channel. May interact with GNA12, GNAS, GNAI1 and GNAI2. In terms of tissue distribution, detected in testis and in fetal and adult heart.

Its subcellular location is the cell projection. It is found in the cilium membrane. Its function is as follows. Component of a calcium-permeant ion channel formed by PKD1L2 and PKD1L1 in primary cilia, where it controls cilium calcium concentration, without affecting cytoplasmic calcium concentration, and regulates sonic hedgehog/SHH signaling and GLI2 transcription. The PKD1L1:PKD2L1 channel complex is mechanosensitive only at high pressures and is highly temperature sensitive. Also involved in left/right axis specification downstream of nodal flow by forming a complex with PKD2 in cilia to facilitate flow detection in left/right patterning. May function as a G-protein-coupled receptor. This Homo sapiens (Human) protein is Polycystin-1-like protein 1.